The primary structure comprises 1120 residues: DNA-directed RNA polymerase subunit beta (1120 aa).

This sequence belongs to the RNA polymerase beta chain family. In terms of assembly, in plastids the minimal PEP RNA polymerase catalytic core is composed of four subunits: alpha, beta, beta', and beta''. When a (nuclear-encoded) sigma factor is associated with the core the holoenzyme is formed, which can initiate transcription.

Its subcellular location is the plastid. The protein localises to the chloroplast. It carries out the reaction RNA(n) + a ribonucleoside 5'-triphosphate = RNA(n+1) + diphosphate. DNA-dependent RNA polymerase catalyzes the transcription of DNA into RNA using the four ribonucleoside triphosphates as substrates. The chain is DNA-directed RNA polymerase subunit beta from Gracilaria tenuistipitata var. liui (Red alga).